We begin with the raw amino-acid sequence, 476 residues long: ATP synthase subunit beta, chloroplastic (476 aa).

G153–T160 is a binding site for ATP.

The protein belongs to the ATPase alpha/beta chains family. As to quaternary structure, F-type ATPases have 2 components, CF(1) - the catalytic core - and CF(0) - the membrane proton channel. CF(1) has five subunits: alpha(3), beta(3), gamma(1), delta(1), epsilon(1). CF(0) has four main subunits: a(1), b(1), b'(1) and c(9-12).

The protein localises to the plastid. The protein resides in the chloroplast thylakoid membrane. It carries out the reaction ATP + H2O + 4 H(+)(in) = ADP + phosphate + 5 H(+)(out). Produces ATP from ADP in the presence of a proton gradient across the membrane. The catalytic sites are hosted primarily by the beta subunits. The chain is ATP synthase subunit beta, chloroplastic from Dicksonia antarctica (Australian tree fern).